Consider the following 152-residue polypeptide: Atypical leghemoglobin 2-1 (152 aa).

In terms of domain architecture, Globin spans 3–152 (TFSEEQEALV…LAGVIKKGMS (150 aa)). Y31 bears the Nitrated tyrosine mark. S46 contributes to the heme b binding site. S46 carries the phosphoserine modification. H64 contacts O2. Heme b-binding residues include K67, H99, and R102. At Y140 the chain carries Nitrated tyrosine.

The protein belongs to the plant globin family. In terms of assembly, monomer. Nitrated in effective nodules and particularly in hypoxic conditions; this mechanism may play a protective role in the symbiosis by buffering toxic peroxynitrite NO(2)(-). Nitration level decrease during nodule senescence. In terms of processing, phosphorylation at Ser-46 disrupts the molecular environment of its porphyrin ring oxygen binding pocket, thus leading to a reduced oxygen consumption and to the delivery of oxygen O(2) to symbiosomes. As to expression, mainly expressed in leaves and, at low levels, in roots of non-nodulated plants. However, accumulates also in nodules and roots, and, to a lower extent, in leaves, stems, flowers and fruits, in nodulated plants.

Atypical leghemoglobin that reversibly binds oxygen O(2) through a pentacoordinated heme iron. In nodules, facilitates the diffusion of oxygen to the bacteroids while preventing the bacterial nitrogenase from being inactivated by buffering dioxygen, nitric oxide and carbon monoxide. This role is essential for symbiotic nitrogen fixation (SNF). Seems not restricted to symbiotic nitrogen fixation and root nodules formation, but also contributes to general plant development and metabolism. The protein is Atypical leghemoglobin 2-1 of Lotus japonicus (Lotus corniculatus var. japonicus).